Consider the following 166-residue polypeptide: Lipoprotein signal peptidase (166 aa).

Helical transmembrane passes span 9–29, 45–65, 71–91, and 100–120; these read ASGA…FDQL, ALTS…FGFL, WQRW…CFLL, and FSLS…DRLV. Residues aspartate 126 and aspartate 144 contribute to the active site. A helical membrane pass occupies residues 135-155; it reads WHFPAFNLADSAITVGAVLLV.

This sequence belongs to the peptidase A8 family.

It localises to the cell inner membrane. It carries out the reaction Release of signal peptides from bacterial membrane prolipoproteins. Hydrolyzes -Xaa-Yaa-Zaa-|-(S,diacylglyceryl)Cys-, in which Xaa is hydrophobic (preferably Leu), and Yaa (Ala or Ser) and Zaa (Gly or Ala) have small, neutral side chains.. It functions in the pathway protein modification; lipoprotein biosynthesis (signal peptide cleavage). Its function is as follows. This protein specifically catalyzes the removal of signal peptides from prolipoproteins. The sequence is that of Lipoprotein signal peptidase from Burkholderia ambifaria (strain MC40-6).